Here is an 854-residue protein sequence, read N- to C-terminus: Gamma-secretase-activating protein (854 aa).

The protein belongs to the GSAP family. Interacts with APP; specifically interacts with the CTF-alpha product of APP. Interacts with the gamma-secretase complex. Post-translationally, the protein is first synthesized as a holoprotein form of 98 kDa and rapidly processed into the gamma-secretase-activating protein 16 kDa C-terminal form, which constitutes the predominant form. In terms of tissue distribution, widely expressed.

It is found in the golgi apparatus. Its subcellular location is the trans-Golgi network. Functionally, regulator of gamma-secretase activity, which specifically activates the production of amyloid-beta protein (amyloid-beta protein 40 and amyloid-beta protein 42), without affecting the cleavage of other gamma-secretase targets such has Notch. The gamma-secretase complex is an endoprotease complex that catalyzes the intramembrane cleavage of integral membrane proteins such as Notch receptors and APP (amyloid-beta precursor protein). Specifically promotes the gamma-cleavage of APP CTF-alpha (also named APP-CTF) by the gamma-secretase complex to generate amyloid-beta, while it reduces the epsilon-cleavage of APP CTF-alpha, leading to a low production of AICD. The sequence is that of Gamma-secretase-activating protein (GSAP) from Homo sapiens (Human).